The primary structure comprises 399 residues: uncharacterized protein (399 aa).

The interval 375–399 is disordered; it reads AAGGHRGSHGKSEQAATVRVVDDRR.

It belongs to the mycobacterial PPE family.

This is an uncharacterized protein from Mycobacterium tuberculosis (strain ATCC 25618 / H37Rv).